The sequence spans 268 residues: Tryptophan synthase alpha chain (268 aa).

Residues E47 and D58 each act as proton acceptor in the active site.

Belongs to the TrpA family. As to quaternary structure, tetramer of two alpha and two beta chains.

It carries out the reaction (1S,2R)-1-C-(indol-3-yl)glycerol 3-phosphate + L-serine = D-glyceraldehyde 3-phosphate + L-tryptophan + H2O. It functions in the pathway amino-acid biosynthesis; L-tryptophan biosynthesis; L-tryptophan from chorismate: step 5/5. The alpha subunit is responsible for the aldol cleavage of indoleglycerol phosphate to indole and glyceraldehyde 3-phosphate. The polypeptide is Tryptophan synthase alpha chain (Chlorobium phaeobacteroides (strain BS1)).